The sequence spans 187 residues: MPTDMSMWTGPLSLHEVDEQPQHLLRVTYTEAEVEELGQVLTPTQVKHRPGSISWDGLDPGKLYTLILTDPDAPSRKKPVYREWHHFLVVNMKGNDISSGNVLSDYVGSGPPKGTGLHRYVWLVYQQDKPLRCDEPILTNRSGDHRGKFKTAAFRKKYHLGAPVAGTCYQAEWDSYVPKLYKQLSGK.

Residues serine 13, serine 52, and serine 54 each carry the phosphoserine modification.

Belongs to the phosphatidylethanolamine-binding protein family. In terms of tissue distribution, testis specific.

Its subcellular location is the cytoplasm. In terms of biological role, may bind to phospholipids. May act as serine protease inhibitor. The protein is Phosphatidylethanolamine-binding protein 2 (Pbp2) of Mus musculus (Mouse).